Consider the following 438-residue polypeptide: GTPase Der (438 aa).

2 EngA-type G domains span residues 4 to 168 (PLVT…KSEG) and 177 to 352 (IKIA…DNYS). Residues 10–17 (GRPNVGKS), 57–61 (DTGGI), 120–123 (NKID), 183–190 (GKPNVGKS), 230–234 (DTAGL), and 295–298 (NKWD) contribute to the GTP site. Residues 353 to 437 (KRIATGVLND…GIKMIFKERK (85 aa)) enclose the KH-like domain.

Belongs to the TRAFAC class TrmE-Era-EngA-EngB-Septin-like GTPase superfamily. EngA (Der) GTPase family. As to quaternary structure, associates with the 50S ribosomal subunit.

GTPase that plays an essential role in the late steps of ribosome biogenesis. The protein is GTPase Der of Clostridium acetobutylicum (strain ATCC 824 / DSM 792 / JCM 1419 / IAM 19013 / LMG 5710 / NBRC 13948 / NRRL B-527 / VKM B-1787 / 2291 / W).